A 492-amino-acid chain; its full sequence is Catalase (492 aa).

Catalysis depends on residues H65 and N138. Y348 lines the heme pocket.

Belongs to the catalase family. Homotetramer. Heme is required as a cofactor.

The protein localises to the cytoplasm. The protein resides in the cytosol. It is found in the peroxisome matrix. The enzyme catalyses 2 H2O2 = O2 + 2 H2O. In terms of biological role, catalyzes the degradation of hydrogen peroxide (H(2)O(2)) generated by peroxisomal oxidases to water and oxygen, thereby protecting cells from the toxic effects of hydrogen peroxide. The protein is Catalase of Helianthus annuus (Common sunflower).